The chain runs to 275 residues: Large ribosomal subunit protein uL2 (275 aa).

Positions 224 to 275 are disordered; the sequence is VMNPVDHPHGGGEGKSPIGRPSPVTPWGKPTLGYKTRKKNKASDKFIIKRRK. A compositionally biased stretch (basic and acidic residues) spans 264 to 275; it reads KASDKFIIKRRK.

Belongs to the universal ribosomal protein uL2 family. As to quaternary structure, part of the 50S ribosomal subunit. Forms a bridge to the 30S subunit in the 70S ribosome.

Its function is as follows. One of the primary rRNA binding proteins. Required for association of the 30S and 50S subunits to form the 70S ribosome, for tRNA binding and peptide bond formation. It has been suggested to have peptidyltransferase activity; this is somewhat controversial. Makes several contacts with the 16S rRNA in the 70S ribosome. The chain is Large ribosomal subunit protein uL2 from Acetivibrio thermocellus (strain ATCC 27405 / DSM 1237 / JCM 9322 / NBRC 103400 / NCIMB 10682 / NRRL B-4536 / VPI 7372) (Clostridium thermocellum).